Reading from the N-terminus, the 447-residue chain is Acyl-CoA (8-3)-desaturase (447 aa).

Met1 carries the N-acetylmethionine modification. Topologically, residues 1 to 124 are cytoplasmic; sequence MAPDPVPTPG…FRELRATVER (124 aa). The Cytochrome b5 heme-binding domain occupies 19–97; the sequence is TRYFTWEEVA…MNSLLIGELA (79 aa). Residues 125 to 145 traverse the membrane as a helical segment; that stretch reads MGLMKANHLFFLVYLLHILLL. At 146–160 the chain is on the lumenal side; sequence DVAAWLTLWIFGTSL. The helical transmembrane segment at 161-180 threads the bilayer; it reads VPFILCAVLLSTVQAQAGWL. Residues 181–268 lie on the Cytoplasmic side of the membrane; the sequence is QHDFGHLSVF…HMPYNHQHKY (88 aa). Positions 182-186 match the Histidine box-1 motif; sequence HDFGH. Positions 219–223 match the Histidine box-2 motif; sequence HFQHH. The helical transmembrane segment at 269–289 threads the bilayer; sequence FFLIGPPALLPLYFQWYIFYF. The Lumenal segment spans residues 290–308; it reads VVQRKKWVDLAWMLSFYAR. Residues 309-329 traverse the membrane as a helical segment; that stretch reads IFFTYMPLLGLKGFLGLFFIV. Over 330 to 447 the chain is Cytoplasmic; the sequence is RFLESNWFVW…QLWLDAYLHQ (118 aa). A Histidine box-3 motif is present at residues 385–389; that stretch reads QIEHH.

This sequence belongs to the fatty acid desaturase type 1 family. As to expression, highly expressed in the adrenal gland, liver, brain, and testis, tissues where lipogenesis and steroidogenesis are active. Expressed in colonic mucosa.

Its subcellular location is the endoplasmic reticulum membrane. The protein localises to the mitochondrion. It carries out the reaction (8Z,11Z,14Z)-eicosatrienoyl-CoA + 2 Fe(II)-[cytochrome b5] + O2 + 2 H(+) = (5Z,8Z,11Z,14Z)-eicosatetraenoyl-CoA + 2 Fe(III)-[cytochrome b5] + 2 H2O. The enzyme catalyses (8Z,11Z,14Z,17Z)-eicosatetraenoyl-CoA + 2 Fe(II)-[cytochrome b5] + O2 + 2 H(+) = (5Z,8Z,11Z,14Z,17Z)-eicosapentaenoyl-CoA + 2 Fe(III)-[cytochrome b5] + 2 H2O. It catalyses the reaction (11E)-octadecenoyl-CoA + 2 Fe(II)-[cytochrome b5] + O2 + 2 H(+) = (5Z,11E)-octadecadienoyl-CoA + 2 Fe(III)-[cytochrome b5] + 2 H2O. Its pathway is lipid metabolism; polyunsaturated fatty acid biosynthesis. Acts as a front-end fatty acyl-coenzyme A (CoA) desaturase that introduces a cis double bond at carbon 5 located between a preexisting double bond and the carboxyl end of the fatty acyl chain. Involved in biosynthesis of highly unsaturated fatty acids (HUFA) from the essential polyunsaturated fatty acids (PUFA) linoleic acid (LA) (18:2n-6) and alpha-linolenic acid (ALA) (18:3n-3) precursors. Specifically, desaturates dihomo-gamma-linoleoate (DGLA) (20:3n-6) and eicosatetraenoate (ETA) (20:4n-3) to generate arachidonate (AA) (20:4n-6) and eicosapentaenoate (EPA) (20:5n-3), respectively. As a rate limiting enzyme for DGLA (20:3n-6) and AA (20:4n-6)-derived eicosanoid biosynthesis, controls the metabolism of inflammatory lipids like prostaglandin E2, critical for efficient acute inflammatory response and maintenance of epithelium homeostasis. Contributes to membrane phospholipid biosynthesis by providing AA (20:4n-6) as a major acyl chain esterified into phospholipids. In particular, regulates phosphatidylinositol-4,5-bisphosphate levels, modulating inflammatory cytokine production in T-cells. Also desaturates (11E)-octadecenoate (trans-vaccenoate)(18:1n-9), a metabolite in the biohydrogenation pathway of LA (18:2n-6). The sequence is that of Acyl-CoA (8-3)-desaturase from Mus musculus (Mouse).